The chain runs to 350 residues: Putative zinc metalloprotease jhp_0242 (350 aa).

His16 provides a ligand contact to Zn(2+). The active site involves Glu17. His20 lines the Zn(2+) pocket. 5 consecutive transmembrane segments (helical) span residues 43 to 63, 94 to 114, 249 to 269, 277 to 297, and 326 to 346; these read WFFK…GGYV, LWIL…VYFF, LIMG…VGAL, MLLL…LLPI, and LWLV…FNDI. One can recognise a PDZ domain in the interval 108-177; the sequence is AVLVYFFLAL…GELILEIERN (70 aa).

Belongs to the peptidase M50B family. It depends on Zn(2+) as a cofactor.

The protein localises to the cell inner membrane. In Helicobacter pylori (strain J99 / ATCC 700824) (Campylobacter pylori J99), this protein is Putative zinc metalloprotease jhp_0242.